A 207-amino-acid polypeptide reads, in one-letter code: Large ribosomal subunit protein uL4 (207 aa).

The tract at residues 54 to 74 (RSDVRGGGKKPYRQKGTGNAR) is disordered.

Belongs to the universal ribosomal protein uL4 family. In terms of assembly, part of the 50S ribosomal subunit.

Functionally, one of the primary rRNA binding proteins, this protein initially binds near the 5'-end of the 23S rRNA. It is important during the early stages of 50S assembly. It makes multiple contacts with different domains of the 23S rRNA in the assembled 50S subunit and ribosome. Its function is as follows. Forms part of the polypeptide exit tunnel. The chain is Large ribosomal subunit protein uL4 from Magnetococcus marinus (strain ATCC BAA-1437 / JCM 17883 / MC-1).